The following is a 542-amino-acid chain: Polysialoglycoprotein (542 aa).

A signal peptide spans 1–21 (MIMGGVRELLLVVMTVGVVKV). Residues 22–120 (SCYPVGKSQK…TSEAATGPSG (99 aa)) constitute a propeptide that is removed on maturation. The tract at residues 70–542 (EEYLETNEVE…GPSGDDAMDI (473 aa)) is disordered. The span at 78–95 (VESQASPNHGSSPANDAL) shows a compositional bias: polar residues. The span at 97-106 (SEEKLRRVSS) shows a compositional bias: basic and acidic residues. The segment covering 107 to 116 (DDAATSEAAT) has biased composition (low complexity). 32 repeat units span residues 121-133 (DDAT…GPSG), 134-146 (DDAT…GPSG), 147-159 (DDAT…GPSG), 160-172 (DDAT…GPSG), 173-185 (DDAT…GPSG), 186-198 (DDAT…GPSG), 199-211 (DDAT…GPSG), 212-224 (DDAT…GPSG), 225-237 (DDAT…GPSG), 238-250 (DDAT…GPSG), 251-263 (DDAT…GPSG), 264-276 (DDAT…GPSG), 277-289 (DDAT…GPSG), 290-302 (DDAT…GPSG), 303-315 (DDAT…GPSG), 316-328 (DDAT…GPSG), 329-341 (DDAT…GPSG), 342-354 (DDAT…GPSG), 355-367 (DDAT…GPSG), 368-380 (DDAT…GPSG), 381-393 (DDAT…GPSG), 394-406 (DDAT…GPSG), 407-419 (DDAT…GPSG), 420-432 (DDAT…GPSG), 433-445 (DDAT…GPSG), 446-458 (DDAT…GPSG), 459-471 (DDAT…GPSG), 472-484 (DDAT…GPSG), 485-497 (DDAT…GPSG), 498-510 (DDAT…GPSG), 511-523 (DDAT…GPSG), and 524-536 (DDAT…GPSG). A 32 X 13 AA tandem repeats of D-D-A-T-S-E-A-A-T-G-P-S-G region spans residues 121 to 536 (DDATSEAATG…TSEAATGPSG (416 aa)). O-linked (GalNAc...) threonine glycosylation occurs at Thr124. Ser125 carries O-linked (GalNAc...) serine glycosylation. Residues Thr129 and Thr137 are each glycosylated (O-linked (GalNAc...) threonine). O-linked (GalNAc...) serine glycosylation is present at Ser138. Thr142 and Thr150 each carry an O-linked (GalNAc...) threonine glycan. O-linked (GalNAc...) serine glycosylation is present at Ser151. Residues Thr155 and Thr163 are each glycosylated (O-linked (GalNAc...) threonine). O-linked (GalNAc...) serine glycosylation is present at Ser164. Residues Thr168 and Thr176 are each glycosylated (O-linked (GalNAc...) threonine). Ser177 carries O-linked (GalNAc...) serine glycosylation. 2 O-linked (GalNAc...) threonine glycosylation sites follow: Thr181 and Thr189. The O-linked (GalNAc...) serine glycan is linked to Ser190. 2 O-linked (GalNAc...) threonine glycosylation sites follow: Thr194 and Thr202. Ser203 is a glycosylation site (O-linked (GalNAc...) serine). O-linked (GalNAc...) threonine glycans are attached at residues Thr207 and Thr215. The O-linked (GalNAc...) serine glycan is linked to Ser216. O-linked (GalNAc...) threonine glycans are attached at residues Thr220 and Thr228. O-linked (GalNAc...) serine glycosylation is present at Ser229. Residues Thr233 and Thr241 are each glycosylated (O-linked (GalNAc...) threonine). O-linked (GalNAc...) serine glycosylation occurs at Ser242. O-linked (GalNAc...) threonine glycosylation is found at Thr246 and Thr254. An O-linked (GalNAc...) serine glycan is attached at Ser255. 2 O-linked (GalNAc...) threonine glycosylation sites follow: Thr259 and Thr267. O-linked (GalNAc...) serine glycosylation occurs at Ser268. Residues Thr272 and Thr280 are each glycosylated (O-linked (GalNAc...) threonine). Ser281 is a glycosylation site (O-linked (GalNAc...) serine). Thr285 and Thr293 each carry an O-linked (GalNAc...) threonine glycan. Ser294 carries an O-linked (GalNAc...) serine glycan. O-linked (GalNAc...) threonine glycans are attached at residues Thr298 and Thr306. O-linked (GalNAc...) serine glycosylation is present at Ser307. Residues Thr311 and Thr319 are each glycosylated (O-linked (GalNAc...) threonine). O-linked (GalNAc...) serine glycosylation is present at Ser320. O-linked (GalNAc...) threonine glycosylation is found at Thr324 and Thr332. Ser333 carries O-linked (GalNAc...) serine glycosylation. O-linked (GalNAc...) threonine glycans are attached at residues Thr337 and Thr345. A glycan (O-linked (GalNAc...) serine) is linked at Ser346. O-linked (GalNAc...) threonine glycans are attached at residues Thr350 and Thr358. O-linked (GalNAc...) serine glycosylation is present at Ser359. Residues Thr363 and Thr371 are each glycosylated (O-linked (GalNAc...) threonine). An O-linked (GalNAc...) serine glycan is attached at Ser372. 2 O-linked (GalNAc...) threonine glycosylation sites follow: Thr376 and Thr384. O-linked (GalNAc...) serine glycosylation is present at Ser385. O-linked (GalNAc...) threonine glycans are attached at residues Thr389 and Thr397. Ser398 is a glycosylation site (O-linked (GalNAc...) serine). Thr402 and Thr410 each carry an O-linked (GalNAc...) threonine glycan. O-linked (GalNAc...) serine glycosylation is present at Ser411. O-linked (GalNAc...) threonine glycosylation is found at Thr415 and Thr423. A glycan (O-linked (GalNAc...) serine) is linked at Ser424. Thr428 and Thr436 each carry an O-linked (GalNAc...) threonine glycan. Residue Ser437 is glycosylated (O-linked (GalNAc...) serine). 2 O-linked (GalNAc...) threonine glycosylation sites follow: Thr441 and Thr449. Ser450 carries an O-linked (GalNAc...) serine glycan. O-linked (GalNAc...) threonine glycans are attached at residues Thr454 and Thr462. An O-linked (GalNAc...) serine glycan is attached at Ser463. 2 O-linked (GalNAc...) threonine glycosylation sites follow: Thr467 and Thr475. Ser476 carries an O-linked (GalNAc...) serine glycan. Thr480 and Thr488 each carry an O-linked (GalNAc...) threonine glycan. O-linked (GalNAc...) serine glycosylation is present at Ser489. Thr493 and Thr501 each carry an O-linked (GalNAc...) threonine glycan. Ser502 is a glycosylation site (O-linked (GalNAc...) serine). 2 O-linked (GalNAc...) threonine glycosylation sites follow: Thr506 and Thr514. Residue Ser515 is glycosylated (O-linked (GalNAc...) serine). O-linked (GalNAc...) threonine glycans are attached at residues Thr519 and Thr527. Ser528 carries an O-linked (GalNAc...) serine glycan. Residue Thr532 is glycosylated (O-linked (GalNAc...) threonine). Positions 537–542 (DDAMDI) are excised as a propeptide.

Most sialic acid residues exist in the form of polysialyl groups partly capped with deaminoneuraminic acid. In terms of tissue distribution, cortical alveoli of immature ovaries.

Its function is as follows. In response to egg activation, PSGP is discharged by exocytosis into the perivitelline space, where it undergoes rapid proteolysis into glycotridecapeptides. During fertilization and/or early development the glycotridecapeptides prevent polyspermy or are involved in the formation of a fertilization membrane. The sequence is that of Polysialoglycoprotein from Oncorhynchus mykiss (Rainbow trout).